The sequence spans 100 residues: NADH-quinone oxidoreductase subunit K (100 aa).

3 consecutive transmembrane segments (helical) span residues 2 to 22 (IPLQ…LTGV), 28 to 48 (LLFM…AFVV), and 60 to 80 (VMFI…LALL).

The protein belongs to the complex I subunit 4L family. As to quaternary structure, NDH-1 is composed of 13 different subunits. Subunits NuoA, H, J, K, L, M, N constitute the membrane sector of the complex.

It localises to the cell inner membrane. The catalysed reaction is a quinone + NADH + 5 H(+)(in) = a quinol + NAD(+) + 4 H(+)(out). Its function is as follows. NDH-1 shuttles electrons from NADH, via FMN and iron-sulfur (Fe-S) centers, to quinones in the respiratory chain. The immediate electron acceptor for the enzyme in this species is believed to be ubiquinone. Couples the redox reaction to proton translocation (for every two electrons transferred, four hydrogen ions are translocated across the cytoplasmic membrane), and thus conserves the redox energy in a proton gradient. This is NADH-quinone oxidoreductase subunit K from Erwinia tasmaniensis (strain DSM 17950 / CFBP 7177 / CIP 109463 / NCPPB 4357 / Et1/99).